The primary structure comprises 1084 residues: TNF receptor-associated factor family protein DDB_G0272098 (1084 aa).

An LIM zinc-binding domain is found at Y19–F103. 2 consecutive TRAF-type zinc fingers follow at residues K122–E190 and I191–S248. Residues I265–S321 adopt a coiled-coil conformation. Disordered regions lie at residues Y348 to E392, I490 to I523, N537 to L656, and S709 to D897. Low complexity-rich tracts occupy residues K349–N375, Q492–Q509, N537–K549, and I556–T570. The stretch at L489–D553 forms a coiled coil. Polar residues predominate over residues H571–I586. Over residues N587–T637 the composition is skewed to low complexity. Positions T644–L656 are enriched in basic and acidic residues. Residues N735–V852 adopt a coiled-coil conformation. The segment covering N739–N757 has biased composition (acidic residues). The span at S774 to T785 shows a compositional bias: polar residues. Basic and acidic residues predominate over residues E790 to E799. A compositionally biased stretch (low complexity) spans N809–N849. Composition is skewed to basic and acidic residues over residues Y853–V864 and E875–K892. One can recognise an MATH domain in the interval I909 to V1042. The disordered stretch occupies residues L1056 to R1084. Over residues K1059 to R1084 the composition is skewed to low complexity.

The protein belongs to the TNF receptor-associated factor family.

Its subcellular location is the cytoplasm. Probable adapter protein and signal transducer that links members of the tumor necrosis factor receptor family to different signaling pathways by association with the receptor cytoplasmic domain and kinases. The sequence is that of TNF receptor-associated factor family protein DDB_G0272098 from Dictyostelium discoideum (Social amoeba).